Here is a 754-residue protein sequence, read N- to C-terminus: Carbon catabolite repressor protein 4 homolog 6 (754 aa).

Disordered stretches follow at residues 34 to 65 and 85 to 176; these read PYRGARGRGRGRGGRSFSDRPYNDDAGRDQFV and EPYR…KTPP. Positions 50–61 are enriched in basic and acidic residues; that stretch reads FSDRPYNDDAGR. Composition is skewed to polar residues over residues 96-106 and 116-133; these read QRQQPPFNQNY and GQWQQFRQPNQFPSNQNY. Residues 162–171 show a composition bias toward basic and acidic residues; the sequence is KPSDYREWEY. Residue glutamate 237 coordinates Mg(2+). 2 disordered regions span residues 404–431 and 494–558; these read VSAEFRPPRPENYTTRYQSANKSPQGQV and IENR…DQDI. 3 stretches are compositionally biased toward polar residues: residues 415-431, 503-525, and 534-545; these read NYTTRYQSANKSPQGQV, GNLSTAEDLSSLTISDTEPQHAS, and DRSVSSGLSETE.

It belongs to the CCR4/nocturin family. Component of the CCR4-NOT complex, at least composed of CRR4 and CAF1 proteins. The cofactor is Mg(2+).

The protein resides in the nucleus. The protein localises to the cytoplasm. The catalysed reaction is Exonucleolytic cleavage of poly(A) to 5'-AMP.. Acts as a catalytic component of the CCR4-NOT core complex, which in the nucleus seems to be a general transcription factor, and in the cytoplasm the major mRNA deadenylase involved in mRNA turnover. In Arabidopsis thaliana (Mouse-ear cress), this protein is Carbon catabolite repressor protein 4 homolog 6 (CCR4-6).